A 115-amino-acid polypeptide reads, in one-letter code: Immunoglobulin kappa variable 5-2 (115 aa).

A signal peptide spans 1–20; sequence MGSQVHLLSFLLLWISDTRA. Residues 21–43 form a framework-1 region; that stretch reads ETTLTQSPAFMSATPGDKVNISC. The Ig-like domain occupies 22–115; sequence TTLTQSPAFM…YFCLQHDNFP (94 aa). Asn-40 carries an N-linked (GlcNAc...) asparagine glycan. Residue Ser-42 is modified to Phosphoserine. A disulfide bridge connects residues Cys-43 and Cys-108. The complementarity-determining-1 stretch occupies residues 44–54; it reads KASQDIDDDMN. A framework-2 region spans residues 55 to 69; the sequence is WYQQKPGEAAIFIIQ. A complementarity-determining-2 region spans residues 70–76; that stretch reads EATTLVP. A framework-3 region spans residues 77–108; sequence GIPPRFSGSGYGTDFTLTINNIESEDAAYYFC. The interval 109–115 is complementarity-determining-3; sequence LQHDNFP.

As to quaternary structure, immunoglobulins are composed of two identical heavy chains and two identical light chains; disulfide-linked.

It localises to the secreted. The protein localises to the cell membrane. Functionally, v region of the variable domain of immunoglobulin light chains that participates in the antigen recognition. Immunoglobulins, also known as antibodies, are membrane-bound or secreted glycoproteins produced by B lymphocytes. In the recognition phase of humoral immunity, the membrane-bound immunoglobulins serve as receptors which, upon binding of a specific antigen, trigger the clonal expansion and differentiation of B lymphocytes into immunoglobulins-secreting plasma cells. Secreted immunoglobulins mediate the effector phase of humoral immunity, which results in the elimination of bound antigens. The antigen binding site is formed by the variable domain of one heavy chain, together with that of its associated light chain. Thus, each immunoglobulin has two antigen binding sites with remarkable affinity for a particular antigen. The variable domains are assembled by a process called V-(D)-J rearrangement and can then be subjected to somatic hypermutations which, after exposure to antigen and selection, allow affinity maturation for a particular antigen. The sequence is that of Immunoglobulin kappa variable 5-2 from Homo sapiens (Human).